The primary structure comprises 590 residues: MMAPPSQVQGRLSSSMNKSLALLTVTLLLGGCQSLIHKTPDGTPPVEDTAVETKAKPEKYGSFSEDSLYSLLVAELAGQRNRFDIALSNYVVQAQKTRDPGVSERAFRIAEYLGADQEALDTSLLWARSAPDNLDAQRAAAIQLARAGRYEESMVYMEKVLNGQGDTHFDFLALSAAETDPDTRAGLLQSFDHLLKKYPNNGQLLFGKALLLQQDGRPDEALTLLEDNSASRHEVAPLLLRSRLLQSMKRSDEALPLLKAGIKEHPDDKRVRLAYARLLVEQNRLDDAKAEFAGLVQQFPDDDDLRFSLALVCLEAQAWDEARIYLEELVERDSHVDAAHFNLGRLAEEQKDTARALDEYAQVGPGNDFLPAQLRQTDVLLKAGRVDEAAQRLDKARSEQPDYAIQLYLIEAEALSNNDQQEKAWQAIQEGLKQYPEDLNLLYTRSMLAEKRNDLAQMEKDLRFVIAREPDNAMALNALGYTLADRTTRYGEARELILKAHKLNPDDPAILDSMGWINYRQGKLADAERYLRQALQRYPDHEVAAHLGEVLWAQGRQGDARAIWREYLDKQPDSDVLRRTIKRLTGAETP.

TPR repeat units follow at residues 235-268 (VAPL…HPDD), 269-302 (KRVR…FPDD), 370-403 (LPAQ…QPDY), 405-438 (IQLY…YPED), and 508-541 (PAIL…YPDH).

In Pseudomonas aeruginosa (strain ATCC 15692 / DSM 22644 / CIP 104116 / JCM 14847 / LMG 12228 / 1C / PRS 101 / PAO1), this protein is TPR repeat-containing protein PA4667.